The following is a 507-amino-acid chain: BPI fold-containing family C protein (507 aa).

Residues 1–23 form the signal peptide; the sequence is MCTKTIPVLWGCFLLWNLYVSSS. N-linked (GlcNAc...) asparagine glycans are attached at residues asparagine 79, asparagine 92, and asparagine 113. Residues cysteine 161 and cysteine 200 are joined by a disulfide bond. Asparagine 213, asparagine 225, asparagine 257, asparagine 301, asparagine 355, asparagine 372, and asparagine 415 each carry an N-linked (GlcNAc...) asparagine glycan.

Belongs to the BPI/LBP/Plunc superfamily. BPI/LBP family. In terms of tissue distribution, detected in the basal layer of the epidermis from inflammatory skin from psoriasis patients, but not in normal skin.

It is found in the secreted. The protein is BPI fold-containing family C protein (BPIFC) of Homo sapiens (Human).